We begin with the raw amino-acid sequence, 592 residues long: ATP-dependent RNA helicase DBP3 (592 aa).

A disordered region spans residues 1–146 (MGKRPIEDDA…AGSYTEHTEL (146 aa)). Residues 19–31 (KKSKKEKSGKSKK) show a composition bias toward basic residues. Basic and acidic residues predominate over residues 73–82 (EAKEASKAGK). Residues 97 to 108 (AARKAARKAEKK) show a composition bias toward basic residues. Polar residues predominate over residues 116–141 (TASSAPTEASSVPAQTLSSSNAGSYT). The Q motif motif lies at 179–206 (VNFKYLPVTDESQRAPFAGFTAPTPIQA). The Helicase ATP-binding domain occupies 209–382 (WPFLLSGRDM…STFMVSPVRI (174 aa)). 222–229 (AETGSGKT) is an ATP binding site. The DEAD box signature appears at 330–333 (DEAD). In terms of domain architecture, Helicase C-terminal spans 413–562 (RLLQLLKQYQ…EVPEELLKFG (150 aa)).

Belongs to the DEAD box helicase family. DDX5/DBP2 subfamily.

The protein localises to the nucleus. The protein resides in the nucleolus. It carries out the reaction ATP + H2O = ADP + phosphate + H(+). ATP-dependent RNA helicase required for 60S ribosomal subunit synthesis. Involved in efficient pre-rRNA processing, predominantly at site A3, which is necessary for the normal formation of 25S and 5.8S rRNAs. In Phaeosphaeria nodorum (strain SN15 / ATCC MYA-4574 / FGSC 10173) (Glume blotch fungus), this protein is ATP-dependent RNA helicase DBP3 (DBP3).